The primary structure comprises 1238 residues: DNA-directed RNA polymerase subunit beta (1238 aa).

Residues 1187–1238 (EGREDTPPEEVYEESYEEGFEEEIEELPEDIDFEPDSFDIENDDLDLEDFDI) are disordered. A compositionally biased stretch (acidic residues) spans 1193–1238 (PPEEVYEESYEEGFEEEIEELPEDIDFEPDSFDIENDDLDLEDFDI).

Belongs to the RNA polymerase beta chain family. In terms of assembly, the RNAP catalytic core consists of 2 alpha, 1 beta, 1 beta' and 1 omega subunit. When a sigma factor is associated with the core the holoenzyme is formed, which can initiate transcription.

The catalysed reaction is RNA(n) + a ribonucleoside 5'-triphosphate = RNA(n+1) + diphosphate. Functionally, DNA-dependent RNA polymerase catalyzes the transcription of DNA into RNA using the four ribonucleoside triphosphates as substrates. The chain is DNA-directed RNA polymerase subunit beta from Thermoanaerobacter pseudethanolicus (strain ATCC 33223 / 39E) (Clostridium thermohydrosulfuricum).